Here is a 345-residue protein sequence, read N- to C-terminus: Neurotrimin (345 aa).

The N-terminal stretch at 1 to 30 (MGVCGSLFLPWKCLVVVSLRLLFLVPTGVP) is a signal peptide. Ig-like C2-type domains follow at residues 39–126 (PKAM…PKTS), 136–218 (PKIV…VKVT), and 222–309 (PPYI…ASIT). N44, N70, and N152 each carry an N-linked (GlcNAc...) asparagine glycan. A disulfide bridge links C57 with C115. 2 cysteine pairs are disulfide-bonded: C157-C201 and C243-C295. Residues N284, N292, N305, and N321 are each glycosylated (N-linked (GlcNAc...) asparagine). Residue N321 is the site of GPI-anchor amidated asparagine attachment. A propeptide spans 322 to 345 (GTSSRRAGCLWLLPLLVLHLLLKF) (removed in mature form).

Belongs to the immunoglobulin superfamily. IgLON family.

The protein resides in the cell membrane. Neural cell adhesion molecule. This chain is Neurotrimin (NTM), found in Bos taurus (Bovine).